Reading from the N-terminus, the 161-residue chain is MIIDKVLGNLHDLPENDLAAYTGLHREKVVLPSAQLVKRIQRATTDHGNEIGIRLASGSGDLRDGDILHVADTNMIVVSVLPTDVLVIAPRTIHEMGVTAHSLGNRHLQAQFFDADSEYGAAVMVCAYDHTVEDYLTHAGVPYTRQERVLPVPFRHAEHSH.

It belongs to the UreE family.

It localises to the cytoplasm. Involved in urease metallocenter assembly. Binds nickel. Probably functions as a nickel donor during metallocenter assembly. The sequence is that of Urease accessory protein UreE from Pseudarthrobacter chlorophenolicus (strain ATCC 700700 / DSM 12829 / CIP 107037 / JCM 12360 / KCTC 9906 / NCIMB 13794 / A6) (Arthrobacter chlorophenolicus).